Here is a 285-residue protein sequence, read N- to C-terminus: Probable endonuclease 4 (285 aa).

Histidine 69, histidine 109, glutamate 145, aspartate 179, histidine 182, histidine 216, aspartate 229, histidine 231, and glutamate 261 together coordinate Zn(2+).

It belongs to the AP endonuclease 2 family. It depends on Zn(2+) as a cofactor.

It carries out the reaction Endonucleolytic cleavage to 5'-phosphooligonucleotide end-products.. Functionally, endonuclease IV plays a role in DNA repair. It cleaves phosphodiester bonds at apurinic or apyrimidinic (AP) sites, generating a 3'-hydroxyl group and a 5'-terminal sugar phosphate. The polypeptide is Probable endonuclease 4 (Salmonella paratyphi C (strain RKS4594)).